A 525-amino-acid polypeptide reads, in one-letter code: GMP synthase [glutamine-hydrolyzing] (525 aa).

The region spanning 9–207 is the Glutamine amidotransferase type-1 domain; sequence RILILDFGSQ…VLDICGCAAL (199 aa). C86 acts as the Nucleophile in catalysis. Active-site residues include H181 and E183. Positions 208–400 constitute a GMPS ATP-PPase domain; it reads WTPSNIVDDA…LGLPYDMVYR (193 aa). Position 235–241 (235–241) interacts with ATP; sequence SGGVDSS.

As to quaternary structure, homodimer.

The catalysed reaction is XMP + L-glutamine + ATP + H2O = GMP + L-glutamate + AMP + diphosphate + 2 H(+). It functions in the pathway purine metabolism; GMP biosynthesis; GMP from XMP (L-Gln route): step 1/1. Catalyzes the synthesis of GMP from XMP. The protein is GMP synthase [glutamine-hydrolyzing] of Pseudomonas aeruginosa (strain LESB58).